A 265-amino-acid polypeptide reads, in one-letter code: Glutamate racemase (265 aa).

Residues 12 to 13 (DS) and 44 to 45 (YG) each bind substrate. Cys75 serves as the catalytic Proton donor/acceptor. Position 76 to 77 (76 to 77 (NT)) interacts with substrate. Catalysis depends on Cys186, which acts as the Proton donor/acceptor. 187-188 (TH) is a binding site for substrate.

It belongs to the aspartate/glutamate racemases family.

The enzyme catalyses L-glutamate = D-glutamate. Its pathway is cell wall biogenesis; peptidoglycan biosynthesis. Functionally, provides the (R)-glutamate required for cell wall biosynthesis. In Pseudomonas aeruginosa (strain ATCC 15692 / DSM 22644 / CIP 104116 / JCM 14847 / LMG 12228 / 1C / PRS 101 / PAO1), this protein is Glutamate racemase.